Consider the following 744-residue polypeptide: MAGRTMQAARCPTDELSLSNCAVVNEKDFQSGQHVMVRTSPNHKYIFTLRTHPSVVPGCIAFSLPQRKWAGLSIGQDIEVALYSFDKAKQCIGTMTIEIDFLQKKNIDSNPYDTDKMAAEFIQQFNNQAFSVGQQLVFSFNDKLFGLLVKDIEAMDPSILKGEPASGKRQKIEVGLVVGNSQVAFEKAENSSLNLIGKAKTKENRQSIINPDWNFEKMGIGGLDKEFSDIFRRAFASRVFPPEIVEQMGCKHVKGILLYGPPGCGKTLLARQIGKMLNAREPKVVNGPEILNKYVGESEANIRKLFADAEEEQRRLGANSGLHIIIFDEIDAICKQRGSMAGSTGVHDTVVNQLLSKIDGVEQLNNILVIGMTNRPDLIDEALLRPGRLEVKMEIGLPDEKGRLQILHIHTARMRGHQLLSADVDIKELAVETKNFSGAELEGLVRAAQSTAMNRHIKASTKVEVDMEKAESLQVTRGDFLASLENDIKPAFGTNQEDYASYIMNGIIKWGDPVTRVLDDGELLVQQTKNSDRTPLVSVLLEGPPHSGKTALAAKIAEESNFPFIKICSPDKMIGFSETAKCQAMKKIFDDAYKSQLSCVVVDDIERLLDYVPIGPRFSNLVLQALLVLLKKAPPQGRKLLIIGTTSRKDVLQEMEMLNAFSTTIHVPNIATGEQLLEALELLGNFKDKERTTIAQQVKGKKVWIGIKKLLMLIEMSLQMDPEYRVRKFLALMREEGASPLDFD.

Position 105 is an N6-acetyllysine (Lys105). Residue Ser207 is modified to Phosphoserine. The residue at position 259 (Tyr259) is a Phosphotyrosine. Residues 505–510 and 545–552 contribute to the ATP site; these read NGIIKW and PHSGKTAL. Thr550 is a binding site for Mg(2+). A Phosphoserine; by CDK16 modification is found at Ser569.

This sequence belongs to the AAA ATPase family. As to quaternary structure, homohexamer. Interacts with GABARAP and GABARAPL2. Interacts with GRIA2. Interacts with PLK2, leading to disrupt the interaction with GRIA2. Interacts with MUSK; may regulate MUSK endocytosis and activity. Interacts with CDK16. Mg(2+) serves as cofactor. Post-translationally, phosphorylation at Ser-569 interferes with homohexamerization.

It localises to the cytoplasm. The enzyme catalyses ATP + H2O = ADP + phosphate + H(+). Required for vesicle-mediated transport. Catalyzes the fusion of transport vesicles within the Golgi cisternae. Is also required for transport from the endoplasmic reticulum to the Golgi stack. Seems to function as a fusion protein required for the delivery of cargo proteins to all compartments of the Golgi stack GRIA2 leads to influence GRIA2 membrane cycling. In Mus musculus (Mouse), this protein is Vesicle-fusing ATPase (Nsf).